A 220-amino-acid chain; its full sequence is Cytidylate kinase (220 aa).

Residue 10 to 18 (GPAGAGKST) coordinates ATP.

Belongs to the cytidylate kinase family. Type 1 subfamily.

It is found in the cytoplasm. The enzyme catalyses CMP + ATP = CDP + ADP. It catalyses the reaction dCMP + ATP = dCDP + ADP. The protein is Cytidylate kinase of Alkaliphilus metalliredigens (strain QYMF).